The chain runs to 595 residues: Anthranilate synthase alpha subunit 1, chloroplastic (595 aa).

A chloroplast-targeting transit peptide spans 1-54 (MSSSMNVATMQALTFSRRLLPSVASRYLSSSSVTVTGYSGRSSAYAPSFRSIKC). V55 is modified (N-acetylvaline). L-tryptophan contacts are provided by residues S115 and 356 to 358 (PYM). 391–392 (GT) contacts chorismate. E418 serves as a coordination point for Mg(2+). Chorismate is bound by residues Y506, R526, 558–560 (GAG), and G560. E573 serves as a coordination point for Mg(2+).

The protein belongs to the anthranilate synthase component I family. Heterotetramer consisting of two non-identical subunits: a beta subunit and a large alpha subunit. The cofactor is Mg(2+). Expressed in the central cylinder of mature primary root zones, including pericycle and early lateral root primordia, and vasculature of cotyledons.

Its subcellular location is the plastid. The protein localises to the chloroplast. It catalyses the reaction chorismate + L-glutamine = anthranilate + pyruvate + L-glutamate + H(+). The protein operates within amino-acid biosynthesis; L-tryptophan biosynthesis; L-tryptophan from chorismate: step 1/5. Feedback inhibition by tryptophan. Part of a heterotetrameric complex that catalyzes the two-step biosynthesis of anthranilate, an intermediate in the biosynthesis of L-tryptophan. In the first step, the glutamine-binding beta subunit of anthranilate synthase (AS) provides the glutamine amidotransferase activity which generates ammonia as a substrate that, along with chorismate, is used in the second step, catalyzed by the large alpha subunit of AS to produce anthranilate. Plays an important regulatory role in auxin production via the tryptophan-dependent biosynthetic pathway. This is Anthranilate synthase alpha subunit 1, chloroplastic (ASA1) from Arabidopsis thaliana (Mouse-ear cress).